The sequence spans 691 residues: Solute carrier family 28 member 3 (691 aa).

The tract at residues 1-78 (MELRSTAAPR…HMEDDDEEMQ (78 aa)) is disordered. The Cytoplasmic segment spans residues 1–102 (MELRSTAAPR…FCRKHKTTLR (102 aa)). Positions 21 to 30 (NEENFLENEN) are enriched in low complexity. Positions 31–42 (TSGNNSIRSRAV) are enriched in polar residues. Residues 43–54 (QSREHTNTKQDE) are compositionally biased toward basic and acidic residues. Residues 103–123 (HIIWGILLAGYLVMVISACVL) traverse the membrane as a helical segment. The Extracellular portion of the chain corresponds to 124-128 (NFHRA). Residues 129 to 149 (LPLFVITVAAIFFVVWDHLMA) form a helical membrane-spanning segment. The Cytoplasmic portion of the chain corresponds to 150–173 (KYEHRIDEMLSPGRRLLNSHWFWL). A helical membrane pass occupies residues 174–194 (KWVIWSSLVLAVIFWLAFDTA). Residues 195–197 (KLG) are Extracellular-facing. The chain crosses the membrane as a helical span at residues 198 to 219 (QQQLVSFGGLIMYIVLLFLFSK). Residues 220-227 (YPTRVYWR) lie on the Cytoplasmic side of the membrane. A helical transmembrane segment spans residues 228–247 (PVLWGIGLQFLLGLLILRTD). Topologically, residues 248–284 (PGFIAFDWLGRQVQTFLEYTDAGASFVFGEKYKDHFF) are extracellular. The chain crosses the membrane as a helical span at residues 285–305 (AFKVLPIVVFFSTVMSMLYYL). Residues 306–329 (GLMQWIIRKVGWIMLVTTGSSPIE) lie on the Cytoplasmic side of the membrane. The helical intramembrane region spans 330 to 348 (SVVASGNIFVGQTESPLLV). Residues 349-361 (RPYLPYITKSELH) lie on the Cytoplasmic side of the membrane. The chain crosses the membrane as a helical span at residues 362–384 (AIMTAGFSTIAGSVLGAYISFGV). Residues 385–386 (PS) are Extracellular-facing. Residues 387–408 (SHLLTASVMSAPASLAAAKLFW) form a helical membrane-spanning segment. The Cytoplasmic portion of the chain corresponds to 409-443 (PETEKPKITLKNAMKMESGDSGNLLEAATQGASSS). The chain crosses the membrane as a helical span at residues 444 to 469 (ISLVANIAVNLIAFLALLSFMNSALS). The Extracellular segment spans residues 470-507 (WFGNMFDYPQLSFELICSYIFMPFSFMMGVEWQDSFMV). An intramembrane region (helical) is located at residues 508–527 (ARLIGYKTFFNEFVAYEHLS). Over 528–566 (KWIHLRKEGGPKFVNGVQQYISIRSEIIATYALCGFANI) the chain is Extracellular. Residues 567 to 577 (GSLGIVIGGLT) traverse the membrane as a helical segment. At 578 to 590 (SMAPSRKRDIASG) the chain is on the cytoplasmic side. The chain crosses the membrane as a helical span at residues 591–613 (AVRALIAGTVACFMTACIAGILS). The Extracellular segment spans residues 614–691 (STPVDINCHH…FNCNGISNTF (78 aa)).

This sequence belongs to the concentrative nucleoside transporter (CNT) (TC 2.A.41) family. In terms of assembly, homotrimer. In terms of tissue distribution, expressed in pancreas, bone marrow, trachea, mammary gland, liver, prostate, and regions of intestine, brain, lung, placenta, testis, kidney, and heart.

Its subcellular location is the cell membrane. The protein localises to the endoplasmic reticulum membrane. It carries out the reaction thymidine(out) + 2 Na(+)(out) = thymidine(in) + 2 Na(+)(in). It catalyses the reaction cytidine(out) + 2 Na(+)(out) = cytidine(in) + 2 Na(+)(in). The catalysed reaction is uridine(out) + 2 Na(+)(out) = uridine(in) + 2 Na(+)(in). The enzyme catalyses adenosine(out) + 2 Na(+)(out) = adenosine(in) + 2 Na(+)(in). It carries out the reaction guanosine(out) + 2 Na(+)(out) = guanosine(in) + 2 Na(+)(in). It catalyses the reaction inosine(out) + 2 Na(+)(out) = inosine(in) + 2 Na(+)(in). Sodium-dependent, pyrimidine- and purine-selective. Involved in the homeostasis of endogenous nucleosides. Exhibits the transport characteristics of the nucleoside transport system cib or N3 subtype (N3/cib) (with marked transport of both thymidine and inosine). Employs a 2:1 sodium/nucleoside ratio. Transports uridine. Also able to transport gemcitabine, 3'-azido-3'-deoxythymidine (AZT), ribavirin and 3-deazauridine. The sequence is that of Solute carrier family 28 member 3 (SLC28A3) from Homo sapiens (Human).